Here is a 301-residue protein sequence, read N- to C-terminus: tRNA pseudouridine synthase B (301 aa).

Asp-48 serves as the catalytic Nucleophile.

This sequence belongs to the pseudouridine synthase TruB family. Type 1 subfamily.

It catalyses the reaction uridine(55) in tRNA = pseudouridine(55) in tRNA. Its function is as follows. Responsible for synthesis of pseudouridine from uracil-55 in the psi GC loop of transfer RNAs. In Mycobacterium ulcerans (strain Agy99), this protein is tRNA pseudouridine synthase B.